Consider the following 74-residue polypeptide: Cytochrome c oxidase subunit 3 (74 aa).

Helical transmembrane passes span 15-37 (SPWPLTGAIGAMTTVSGMVKWFH) and 42-59 (SLFLLGNIITILTVYQWW).

It belongs to the cytochrome c oxidase subunit 3 family. Component of the cytochrome c oxidase (complex IV, CIV), a multisubunit enzyme composed of a catalytic core of 3 subunits and several supernumerary subunits. The complex exists as a monomer or a dimer and forms supercomplexes (SCs) in the inner mitochondrial membrane with ubiquinol-cytochrome c oxidoreductase (cytochrome b-c1 complex, complex III, CIII).

It localises to the mitochondrion inner membrane. It carries out the reaction 4 Fe(II)-[cytochrome c] + O2 + 8 H(+)(in) = 4 Fe(III)-[cytochrome c] + 2 H2O + 4 H(+)(out). In terms of biological role, component of the cytochrome c oxidase, the last enzyme in the mitochondrial electron transport chain which drives oxidative phosphorylation. The respiratory chain contains 3 multisubunit complexes succinate dehydrogenase (complex II, CII), ubiquinol-cytochrome c oxidoreductase (cytochrome b-c1 complex, complex III, CIII) and cytochrome c oxidase (complex IV, CIV), that cooperate to transfer electrons derived from NADH and succinate to molecular oxygen, creating an electrochemical gradient over the inner membrane that drives transmembrane transport and the ATP synthase. Cytochrome c oxidase is the component of the respiratory chain that catalyzes the reduction of oxygen to water. Electrons originating from reduced cytochrome c in the intermembrane space (IMS) are transferred via the dinuclear copper A center (CU(A)) of subunit 2 and heme A of subunit 1 to the active site in subunit 1, a binuclear center (BNC) formed by heme A3 and copper B (CU(B)). The BNC reduces molecular oxygen to 2 water molecules using 4 electrons from cytochrome c in the IMS and 4 protons from the mitochondrial matrix. In Drosophila simulans (Fruit fly), this protein is Cytochrome c oxidase subunit 3 (mt:CoIII).